Reading from the N-terminus, the 772-residue chain is Magnetosome formation protease MamE (772 aa).

Topologically, residues 1-21 are cytoplasmic; that stretch reads MTMFNGDVEDGGRSNVSCGKD. Residues 22–42 traverse the membrane as a helical segment; sequence LKRYLMLMGVVALVVLFGAFI. At 43-772 the chain is on the lumenal side; that stretch reads YRQSSGGLRL…RNGQEFWIVL (730 aa). Active-site charge relay system residues include His187, Asp220, and Ser296. An MCR (magnetochrome) 1 motif is present at residues 374–397; that stretch reads IAAGTPSPHVDGRQNMDCSNCHDI. The heme site is built by Cys391, Cys394, His395, Cys437, Cys440, His441, Cys488, Cys491, and His492. 2 consecutive short sequence motifs (MCR) follow at residues 420–443 and 470–494; these read IPAN…CHQF and AIRA…CHQI. Positions 445–558 constitute a Cytochrome c domain; it reads GGAAAGPIAF…ALTPLTQRLG (114 aa). PDZ domains follow at residues 522–626 and 696–765; these read AINI…LRAG and GATP…HRNG.

This sequence in the N-terminal section; belongs to the peptidase S1C family. Might interact with MamB via PDZ1. The cofactor is heme. Post-translationally, the protein isolated from magnetosome membranes has a molecular weight of about 36.3 kDa, probably due to C-terminal cleavage. Subject to autocatalytic cleavage; cleavage also requires MamO; these may be the same event.

The protein resides in the magnetosome membrane. In terms of biological role, acts at 2 distinct steps of magnetosome formation; required for correct localization of proteins to the magnetosome while the protease activity is required for maturation of small magnetite crystals into larger, functional ones. Probably cleaves at least itself, MamO and MamP; cleavage requires the putative transprot domain of MamO. Involved in localization of some proteins (at least MamA, MamC, MamF, MamI and MamJ) to the magnetosome. One of 7 genes (mamLQBIEMO) able to induce magnetosome membrane biogenesis; coexpression of mamLQRBIEMO in a deletion of the 17 gene mamAB operon restores magnetosome vesicle formation but not magnetite biosynthesis. The protein is Magnetosome formation protease MamE of Magnetospirillum gryphiswaldense (strain DSM 6361 / JCM 21280 / NBRC 15271 / MSR-1).